The sequence spans 147 residues: Large ribosomal subunit protein uL13 (147 aa).

The protein belongs to the universal ribosomal protein uL13 family. Part of the 50S ribosomal subunit.

Its function is as follows. This protein is one of the early assembly proteins of the 50S ribosomal subunit, although it is not seen to bind rRNA by itself. It is important during the early stages of 50S assembly. This chain is Large ribosomal subunit protein uL13, found in Rhodococcus jostii (strain RHA1).